The following is a 372-amino-acid chain: MELQEVLRMNGGEGDTSYAKNSAYNQLVLAKVKPVLEQCVRELLRANLPNINKCIKVADLGCASGPNTLLTVRDIVQSIDKVGQEKKNELERPTIQIFLNDLFPNDFNSVFKLLPSFYRKLEKENGRKIGSCLIGAMPGSFYSRLFPEESMHFLHSCYCLQWLSQVPSGLVTELGISTNKGSIYSSKASRLPVQKAYLDQFTKDFTTFLRIHSEELFSHGRMLLTCICKGVELDARNAIDLLEMAINDLVVEGHLEEEKLDSFNLPVYIPSAEEVKCIVEEEGSFEILYLETFKVLYDAGFSIDDEHIKAEYVASSVRAVYEPILASHFGEAIIPDIFHRFAKHAAKVLPLGKGFYNNLIISLAKKPEKSDV.

Residue Tyr18 participates in S-adenosyl-L-homocysteine binding. Residues Asn21 and Asn25 each contribute to the xanthosine site. S-adenosyl-L-homocysteine-binding residues include Cys62, Asn67, Asp101, Leu102, Ser140, Phe141, and Cys157. Tyr158 is a xanthosine binding site. Cys159 contributes to the S-adenosyl-L-homocysteine binding site. Xanthosine-binding residues include Gln161 and Trp162. Asn179, Asp261, Phe263, and Asn264 together coordinate Mg(2+). Residues Ser316, Tyr321, and Tyr356 each contribute to the xanthosine site.

Belongs to the methyltransferase superfamily. Type-7 methyltransferase family. Requires Mg(2+) as cofactor. Expressed in stems, young leaves, floral buds, developing endosperm and immature fruits (grains). Detected in roots and old leaves, but not in mature fruits.

The catalysed reaction is xanthosine + S-adenosyl-L-methionine = 7-methylxanthosine + S-adenosyl-L-homocysteine. Its pathway is alkaloid biosynthesis. Functionally, involved in the biosynthesis of caffeine. Specific for xanthosine and could not use xanthosine 5'-monophosphate (XMP) as substrate. Catalyzes the 7-N-methylation activity of xanthosine, but does not have 1-N- or 3-N-methylation activity. In Coffea arabica (Arabian coffee), this protein is 7-methylxanthosine synthase 1.